Reading from the N-terminus, the 398-residue chain is 1-deoxy-D-xylulose 5-phosphate reductoisomerase (398 aa).

NADPH contacts are provided by T10, G11, S12, V13, G36, R37, N38, and N124. K125 contacts 1-deoxy-D-xylulose 5-phosphate. Residue E126 participates in NADPH binding. D150 contacts Mn(2+). The 1-deoxy-D-xylulose 5-phosphate site is built by S151, E152, S186, and H209. Residue E152 participates in Mn(2+) binding. Residue G215 coordinates NADPH. Residues S222, N227, K228, and E231 each coordinate 1-deoxy-D-xylulose 5-phosphate. E231 contributes to the Mn(2+) binding site.

Belongs to the DXR family. Homodimer. Mg(2+) is required as a cofactor. Requires Mn(2+) as cofactor.

It carries out the reaction 2-C-methyl-D-erythritol 4-phosphate + NADP(+) = 1-deoxy-D-xylulose 5-phosphate + NADPH + H(+). Its pathway is isoprenoid biosynthesis; isopentenyl diphosphate biosynthesis via DXP pathway; isopentenyl diphosphate from 1-deoxy-D-xylulose 5-phosphate: step 1/6. Its function is as follows. Catalyzes the NADPH-dependent rearrangement and reduction of 1-deoxy-D-xylulose-5-phosphate (DXP) to 2-C-methyl-D-erythritol 4-phosphate (MEP). The protein is 1-deoxy-D-xylulose 5-phosphate reductoisomerase of Serratia proteamaculans (strain 568).